Consider the following 561-residue polypeptide: DNA ligase B (561 aa).

Lysine 125 functions as the N6-AMP-lysine intermediate in the catalytic mechanism.

The protein belongs to the NAD-dependent DNA ligase family. LigB subfamily.

It carries out the reaction NAD(+) + (deoxyribonucleotide)n-3'-hydroxyl + 5'-phospho-(deoxyribonucleotide)m = (deoxyribonucleotide)n+m + AMP + beta-nicotinamide D-nucleotide.. Catalyzes the formation of phosphodiester linkages between 5'-phosphoryl and 3'-hydroxyl groups in double-stranded DNA using NAD as a coenzyme and as the energy source for the reaction. This is DNA ligase B from Salmonella paratyphi B (strain ATCC BAA-1250 / SPB7).